A 383-amino-acid polypeptide reads, in one-letter code: Succinyl-diaminopimelate desuccinylase (383 aa).

Histidine 73 contacts Zn(2+). Residue aspartate 75 is part of the active site. Position 107 (aspartate 107) interacts with Zn(2+). Glutamate 141 (proton acceptor) is an active-site residue. Positions 142, 170, and 356 each coordinate Zn(2+).

Belongs to the peptidase M20A family. DapE subfamily. Homodimer. Requires Zn(2+) as cofactor. It depends on Co(2+) as a cofactor.

It carries out the reaction N-succinyl-(2S,6S)-2,6-diaminopimelate + H2O = (2S,6S)-2,6-diaminopimelate + succinate. It participates in amino-acid biosynthesis; L-lysine biosynthesis via DAP pathway; LL-2,6-diaminopimelate from (S)-tetrahydrodipicolinate (succinylase route): step 3/3. Its function is as follows. Catalyzes the hydrolysis of N-succinyl-L,L-diaminopimelic acid (SDAP), forming succinate and LL-2,6-diaminopimelate (DAP), an intermediate involved in the bacterial biosynthesis of lysine and meso-diaminopimelic acid, an essential component of bacterial cell walls. This Pseudomonas putida (strain GB-1) protein is Succinyl-diaminopimelate desuccinylase.